A 550-amino-acid polypeptide reads, in one-letter code: Methionine--tRNA ligase (550 aa).

Residues 13–23 (PYANGPLHFGH) carry the 'HIGH' region motif. Zn(2+)-binding residues include cysteine 145, cysteine 148, cysteine 158, and cysteine 161. Positions 331-335 (QFSKS) match the 'KMSKS' region motif. Lysine 334 is a binding site for ATP.

It belongs to the class-I aminoacyl-tRNA synthetase family. MetG type 1 subfamily. In terms of assembly, monomer. It depends on Zn(2+) as a cofactor.

Its subcellular location is the cytoplasm. It carries out the reaction tRNA(Met) + L-methionine + ATP = L-methionyl-tRNA(Met) + AMP + diphosphate. In terms of biological role, is required not only for elongation of protein synthesis but also for the initiation of all mRNA translation through initiator tRNA(fMet) aminoacylation. The protein is Methionine--tRNA ligase of Chlamydia trachomatis serovar A (strain ATCC VR-571B / DSM 19440 / HAR-13).